A 502-amino-acid chain; its full sequence is Reduced meiotic recombination protein C1442.04c (502 aa).

Phosphoserine occurs at positions 328, 330, and 331. Disordered regions lie at residues 353 to 391 (NDLNNEEPNSVVAEDGSEIITLDENDQSPNEATEKLRDN), 420 to 440 (GSLNNADLSQEPITNDGENVD), and 454 to 502 (ESAF…PSDD). The span at 367–378 (DGSEIITLDEND) shows a compositional bias: acidic residues. 2 stretches are compositionally biased toward polar residues: residues 420 to 436 (GSLNNADLSQEPITNDG) and 462 to 477 (GTINSSKRRLSVTTDT).

It belongs to the RMR1 family.

It localises to the cytoplasm. The protein localises to the nucleus. Its function is as follows. Required for normal levels of gene conversion events during meiosis. In Schizosaccharomyces pombe (strain 972 / ATCC 24843) (Fission yeast), this protein is Reduced meiotic recombination protein C1442.04c.